We begin with the raw amino-acid sequence, 1163 residues long: Voltage-gated inwardly rectifying potassium channel KCNH2 (1163 aa).

The Cytoplasmic segment spans residues 1–405 (MPVRRGHVAP…RIHRWTILHY (405 aa)). The region spanning 17-88 (TIIRKFEGQS…AAQIAQALLG (72 aa)) is the PAS domain. In terms of domain architecture, PAC spans 92–144 (RKVEIAFYRKDGSCFLCLVDVVPVKNEDGAVIMFILNFEVVMEKDMVGSPAHD). Residues 235–286 (VGPASASPVASIPGPHPSPRAQSLNPDASGSSCSLARTRSRESCASVRRASS) are disordered. Phosphoserine is present on residues Ser-239 and Ser-245. The span at 254–271 (RAQSLNPDASGSSCSLAR) shows a compositional bias: polar residues. Phosphoserine occurs at positions 285, 286, 322, and 353. The chain crosses the membrane as a helical span at residues 406–426 (SPFKAVWDWLILLLVIYTAVF). The Extracellular portion of the chain corresponds to 427–452 (TPYSAAFLLKETEDGSQAPDCGYACQ). The helical transmembrane segment at 453–473 (PLAVVDLLVDIMFIVDILINF) threads the bilayer. Over 474–497 (RTTYVNANEEVVSHPGRIAVHYFK) the chain is Cytoplasmic. Residues 498-518 (GWFLIDMVAAIPFDLLIFGSG) traverse the membrane as a helical segment. Over 519–522 (SEEL) the chain is Extracellular. The helical; Voltage-sensor transmembrane segment at 523–543 (IGLLKTARLLRLVRVARKLDR) threads the bilayer. Topologically, residues 544 to 549 (YSEYGA) are cytoplasmic. A helical membrane pass occupies residues 550-570 (AVLFLLMCTFALIAHWLACIW). Topologically, residues 571 to 613 (YAIGNMEQPHMDSHIGWLHNLGDQIGKPYNSSGLGGPSIKDKY) are extracellular. Asn-600 carries an N-linked (GlcNAc...) asparagine glycan. The pore-forming intramembrane region spans 614-634 (VTALYFTFSSLTSVGFGNVSP). Residues 626-631 (SVGFGN) carry the Selectivity filter motif. Residues 635–640 (NTNSEK) lie on the Extracellular side of the membrane. Residues 641–661 (IFSICVMLIGSLMYASIFGNV) traverse the membrane as a helical segment. The Cytoplasmic portion of the chain corresponds to 662-1163 (SAIIQRLYSG…LHRHGSDPGS (502 aa)). The interval 744-844 (PFRGATKGCL…IHRDDLLEVL (101 aa)) is cNMP-binding domain. Residues Ser-873 and Ser-876 each carry the phosphoserine modification. Disordered stretches follow at residues 873 to 992 (SPSS…NPLS), 1015 to 1043 (ELPRCPAPAPSLLNIPLSSPGRRSRGDVE), and 1126 to 1163 (AGAPELPQDGPTRRLSLPGQLGALTSQPLHRHGSDPGS). The span at 885 to 894 (RQRKRKLSFR) shows a compositional bias: basic residues. The segment covering 932–943 (GESPSSGPSSPE) has biased composition (low complexity). An Omega-N-methylarginine modification is found at Arg-1018. Residues 1039–1066 (RGDVESRLDALQRQLNRLETRLSADMAT) adopt a coiled-coil conformation. Ser-1141 carries the phosphoserine modification.

This sequence belongs to the potassium channel family. H (Eag) (TC 1.A.1.20) subfamily. Kv11.1/KCNH2 sub-subfamily. As to quaternary structure, the potassium channel is probably composed of a homo- or heterotetrameric complex of pore-forming alpha subunits that can associate with modulating beta subunits. Interacts with DNAJB12 and DNAJB14; chaperones DNAJB12 and DNAJB14 promote tetramerization. Heteromultimer with KCNH6/ERG2 and KCNH7/ERG3. Interacts with ALG10B. Forms a stable complex with KCNE1 or KCNE2, and that this heteromultimerization regulates Inward rectifier potassium channel activity. Interacts with CANX. The core-glycosylated, but not the fully glycosylated form interacts with RNF207. Interacts with NDFIP1 and NDFIP2; this interaction decreases the cell membrane expression by targeting KCNH2, through interaction with NEDD4L, for the degradation through the multivesicular bodies (MVBs)-lysosomal pathway. Phosphorylated on serine and threonine residues. Phosphorylation by PKA inhibits ion conduction. As to expression, highly expressed in brain and testis, slightly less so in heart, adrenal, retina and thymus. Detected at lower levels in lung, soleus, tibialis, and at very low levels in cornea and lens. A shorter transcript is detected in skeletal muscle. Found in pituitary.

The protein localises to the cell membrane. It carries out the reaction K(+)(in) = K(+)(out). In terms of biological role, pore-forming (alpha) subunit of voltage-gated inwardly rectifying potassium channel. Characterized by unusual gating kinetics by producing relatively small outward currents during membrane depolarization and large inward currents during subsequent repolarization which reflect a rapid inactivation during depolarization and quick recovery from inactivation but slow deactivation (closing) during repolarization. Channel properties are modulated by cAMP and subunit assembly. Forms a stable complex with KCNE1 or KCNE2, and that this heteromultimerization regulates inward rectifier potassium channel activity. In Rattus norvegicus (Rat), this protein is Voltage-gated inwardly rectifying potassium channel KCNH2.